Here is a 339-residue protein sequence, read N- to C-terminus: Aspartate carbamoyltransferase catalytic subunit (339 aa).

Carbamoyl phosphate contacts are provided by Arg-59 and Thr-60. An L-aspartate-binding site is contributed by Lys-87. Residues Arg-109, His-142, and Gln-145 each coordinate carbamoyl phosphate. Residues Arg-182 and Arg-253 each coordinate L-aspartate. Residues Gly-294 and Pro-295 each contribute to the carbamoyl phosphate site.

This sequence belongs to the aspartate/ornithine carbamoyltransferase superfamily. ATCase family. As to quaternary structure, heterododecamer (2C3:3R2) of six catalytic PyrB chains organized as two trimers (C3), and six regulatory PyrI chains organized as three dimers (R2).

It catalyses the reaction carbamoyl phosphate + L-aspartate = N-carbamoyl-L-aspartate + phosphate + H(+). It functions in the pathway pyrimidine metabolism; UMP biosynthesis via de novo pathway; (S)-dihydroorotate from bicarbonate: step 2/3. Functionally, catalyzes the condensation of carbamoyl phosphate and aspartate to form carbamoyl aspartate and inorganic phosphate, the committed step in the de novo pyrimidine nucleotide biosynthesis pathway. The sequence is that of Aspartate carbamoyltransferase catalytic subunit from Prochlorococcus marinus (strain NATL1A).